The sequence spans 276 residues: Large ribosomal subunit protein uL2 (276 aa).

Positions R221 to K276 are disordered. Residues K252–K276 are compositionally biased toward basic residues.

This sequence belongs to the universal ribosomal protein uL2 family. In terms of assembly, part of the 50S ribosomal subunit. Forms a bridge to the 30S subunit in the 70S ribosome.

Functionally, one of the primary rRNA binding proteins. Required for association of the 30S and 50S subunits to form the 70S ribosome, for tRNA binding and peptide bond formation. It has been suggested to have peptidyltransferase activity; this is somewhat controversial. Makes several contacts with the 16S rRNA in the 70S ribosome. The protein is Large ribosomal subunit protein uL2 of Aster yellows witches'-broom phytoplasma (strain AYWB).